We begin with the raw amino-acid sequence, 172 residues long: ATP-dependent kinase-like protein notR' (172 aa).

This sequence belongs to the YFH7 family.

In terms of biological role, ATP-dependent kinase-like protein; part of the gene cluster that mediates the biosynthesis of notoamide, a fungal indole alkaloid that belongs to a family of natural products containing a characteristic bicyclo[2.2.2]diazaoctane core. The first step of notoamide biosynthesis involves coupling of L-proline and L-tryptophan by the bimodular NRPS notE', to produce cyclo-L-tryptophan-L-proline called brevianamide F. The reverse prenyltransferase notF' then acts as a deoxybrevianamide E synthase and converts brevianamide F to deoxybrevianamide E via reverse prenylation at C-2 of the indole ring leading to the bicyclo[2.2.2]diazaoctane core. Deoxybrevianamide E is further hydroxylated at C-6 of the indole ring, likely catalyzed by the cytochrome P450 monooxygenase notG', to yield 6-hydroxy-deoxybrevianamide E. 6-hydroxy-deoxybrevianamide E is a specific substrate of the prenyltransferase notC' for normal prenylation at C-7 to produce 6-hydroxy-7-prenyl-deoxybrevianamide, also called notoamide S. As the proposed pivotal branching point in notoamide biosynthesis, notoamide S can be diverted to notoamide E through an oxidative pyran ring closure putatively catalyzed by either notH' cytochrome P450 monooxygenase or the notD' FAD-linked oxidoreductase. This step would be followed by an indole 2,3-epoxidation-initiated pinacol-like rearrangement catalyzed by the notB' FAD-dependent monooxygenase leading to the formation of notoamide C and notoamide D. On the other hand notoamide S is converted to notoamide T by notH' (or notD'), a bifunctional oxidase that also functions as the intramolecular Diels-Alderase responsible for generation of (-)-notoamide T. To generate antipodal (+)-notoaminide T, notH (or notD) in Aspergillus strain MF297-2 is expected to catalyze a Diels-Alder reaction leading to the opposite stereochemistry. The remaining oxidoreductase notD' (or notH') likely catalyzes the oxidative pyran ring formation to yield (-)-stephacidin A. The FAD-dependent monooxygenase notI' is highly similar to notB' and is predicted to catalyze a similar conversion from (-)-stephacidin A to (+)-notoamide B via the 2,3-epoxidation of (-)-stephacidin A followed by a pinacol-type rearrangement. Finally, it remains unclear which enzyme could be responsible for the final hydroxylation steps leading to notoamide A and sclerotiamide. The function of notQ' in the notoamide biosynthesis has not been determined yet. The protein is ATP-dependent kinase-like protein notR' of Aspergillus versicolor.